A 518-amino-acid polypeptide reads, in one-letter code: Protein translocase subunit SecD (518 aa).

Transmembrane regions (helical) follow at residues 9–29, 356–376, 377–397, 406–426, 451–473, and 486–506; these read IVLS…NFIQ, GKKA…LSYG, VIGL…LALL, LPGI…NVLI, AFAT…YIFG, and IGII…IDIW.

It belongs to the SecD/SecF family. SecD subfamily. Forms a complex with SecF. Part of the essential Sec protein translocation apparatus which comprises SecA, SecYEG and auxiliary proteins SecDF-YajC and YidC.

Its subcellular location is the cell inner membrane. Part of the Sec protein translocase complex. Interacts with the SecYEG preprotein conducting channel. SecDF uses the proton motive force (PMF) to complete protein translocation after the ATP-dependent function of SecA. The sequence is that of Protein translocase subunit SecD from Rickettsia typhi (strain ATCC VR-144 / Wilmington).